The sequence spans 203 residues: GTP cyclohydrolase-2 (203 aa).

GTP is bound at residue 49–53 (RIHSE). 3 residues coordinate Zn(2+): C54, C65, and C67. Residues Q70, 92-94 (EGR), and T114 each bind GTP. D126 serves as the catalytic Proton acceptor. R128 functions as the Nucleophile in the catalytic mechanism. GTP is bound by residues T149 and K154.

This sequence belongs to the GTP cyclohydrolase II family. It depends on Zn(2+) as a cofactor.

It carries out the reaction GTP + 4 H2O = 2,5-diamino-6-hydroxy-4-(5-phosphoribosylamino)-pyrimidine + formate + 2 phosphate + 3 H(+). Its pathway is cofactor biosynthesis; riboflavin biosynthesis; 5-amino-6-(D-ribitylamino)uracil from GTP: step 1/4. Functionally, catalyzes the conversion of GTP to 2,5-diamino-6-ribosylamino-4(3H)-pyrimidinone 5'-phosphate (DARP), formate and pyrophosphate. This Shewanella oneidensis (strain ATCC 700550 / JCM 31522 / CIP 106686 / LMG 19005 / NCIMB 14063 / MR-1) protein is GTP cyclohydrolase-2.